The primary structure comprises 121 residues: Large ribosomal subunit protein uL18 (121 aa).

Belongs to the universal ribosomal protein uL18 family. As to quaternary structure, part of the 50S ribosomal subunit; part of the 5S rRNA/L5/L18/L25 subcomplex. Contacts the 5S and 23S rRNAs.

Its function is as follows. This is one of the proteins that bind and probably mediate the attachment of the 5S RNA into the large ribosomal subunit, where it forms part of the central protuberance. The sequence is that of Large ribosomal subunit protein uL18 from Spiroplasma kunkelii.